The following is a 281-amino-acid chain: Bifunctional protein FolD (281 aa).

163 to 165 (GRS) is an NADP(+) binding site.

It belongs to the tetrahydrofolate dehydrogenase/cyclohydrolase family. In terms of assembly, homodimer.

It catalyses the reaction (6R)-5,10-methylene-5,6,7,8-tetrahydrofolate + NADP(+) = (6R)-5,10-methenyltetrahydrofolate + NADPH. It carries out the reaction (6R)-5,10-methenyltetrahydrofolate + H2O = (6R)-10-formyltetrahydrofolate + H(+). The protein operates within one-carbon metabolism; tetrahydrofolate interconversion. Functionally, catalyzes the oxidation of 5,10-methylenetetrahydrofolate to 5,10-methenyltetrahydrofolate and then the hydrolysis of 5,10-methenyltetrahydrofolate to 10-formyltetrahydrofolate. This Leuconostoc mesenteroides subsp. mesenteroides (strain ATCC 8293 / DSM 20343 / BCRC 11652 / CCM 1803 / JCM 6124 / NCDO 523 / NBRC 100496 / NCIMB 8023 / NCTC 12954 / NRRL B-1118 / 37Y) protein is Bifunctional protein FolD.